The following is a 330-amino-acid chain: Probable pectinesterase 55 (330 aa).

The N-terminal stretch at 1-24 is a signal peptide; sequence MGTHRIILGLAALCCFCLPHLIEA. Asparagine 38 and asparagine 52 each carry an N-linked (GlcNAc...) asparagine glycan. The Proton donor role is filled by aspartate 161. The active-site Nucleophile is the aspartate 182. Arginine 243 and tryptophan 245 together coordinate substrate. 2 N-linked (GlcNAc...) asparagine glycosylation sites follow: asparagine 257 and asparagine 292.

Belongs to the pectinesterase family.

The protein resides in the secreted. It is found in the cell wall. It carries out the reaction [(1-&gt;4)-alpha-D-galacturonosyl methyl ester](n) + n H2O = [(1-&gt;4)-alpha-D-galacturonosyl](n) + n methanol + n H(+). It functions in the pathway glycan metabolism; pectin degradation; 2-dehydro-3-deoxy-D-gluconate from pectin: step 1/5. In terms of biological role, acts in the modification of cell walls via demethylesterification of cell wall pectin. The polypeptide is Probable pectinesterase 55 (PME55) (Arabidopsis thaliana (Mouse-ear cress)).